We begin with the raw amino-acid sequence, 651 residues long: Bromodomain-containing protein 7 (651 aa).

Residue Lys21 forms a Glycyl lysine isopeptide (Lys-Gly) (interchain with G-Cter in SUMO2) linkage. The disordered stretch occupies residues 34 to 103 (VTELSTGSSG…RDRAENEVDR (70 aa)). Over residues 35-45 (TELSTGSSGHD) the composition is skewed to polar residues. Over residues 47 to 57 (SLFEDRSDHDK) the composition is skewed to basic and acidic residues. Positions 58–69 (HKDRKRKKRKKG) are enriched in basic residues. The Nuclear localization signal signature appears at 65–96 (KRKKGEKQAPGEEKGRKRRRVKEDKKKRDRDR). The segment covering 70 to 103 (EKQAPGEEKGRKRRRVKEDKKKRDRDRAENEVDR) has biased composition (basic and acidic residues). Glycyl lysine isopeptide (Lys-Gly) (interchain with G-Cter in SUMO2) cross-links involve residues Lys127, Lys186, Lys197, Lys201, Lys212, and Lys241. In terms of domain architecture, Bromo spans 131–235 (VEQTPLQEAL…HSGMKILSQE (105 aa)). Positions 252 to 316 (KTRKQKERTD…RSSNSEREHE (65 aa)) are disordered. Phosphoserine occurs at positions 279 and 289. The segment covering 290-316 (PAKDNKRKDKDVLEDKWRSSNSEREHE) has biased composition (basic and acidic residues). A Glycyl lysine isopeptide (Lys-Gly) (interchain with G-Cter in SUMO2) cross-link involves residue Lys305. An N6-acetyllysine modification is found at Lys328. Lys344 is covalently cross-linked (Glycyl lysine isopeptide (Lys-Gly) (interchain with G-Cter in SUMO2)). Ser380 is subject to Phosphoserine. Lys389 is covalently cross-linked (Glycyl lysine isopeptide (Lys-Gly) (interchain with G-Cter in SUMO2)). A phosphoserine mark is found at Ser475, Ser482, and Ser483. A coiled-coil region spans residues 536 to 567 (SEEAEVFQRKLDETTRLLRELQEAQNERLSTR). Ser621 bears the Phosphoserine mark.

In terms of assembly, interacts with IRF2 and HNRPUL1. Interacts (via N-terminus) with TP53. Interacts (via C-terminus) with EP300. Interacts with BRCA1. Interacts (via bromo domain) with histone H3 (via N-terminus) acetylated at 'Lys-14' (H3K14ac). Has low affinity for histone H3 acetylated at 'Lys-9' (H3K9ac). Has the highest affinity for histone H3 that is acetylated both at 'Lys-9' (H3K9ac) and at 'Lys-14' (H3K14ac). Has very low affinity for non-acetylated histone H3. Interacts (via bromo domain) with histone H4 (via N-terminus) acetylated at 'Lys-8' (H3K8ac) (in vitro). Interacts with TRIM24, PTPN13 and DVL1. Identified in a complex with SMARCA4/BRG1, SMARCC1/BAF155, SMARCE1/BAF57, DPF2/BAF45D and ARID2, subunits of the SWI/SNF-B (PBAF) chromatin remodeling complex. Ubiquitous.

It is found in the nucleus. The protein localises to the chromosome. Functionally, acts both as coactivator and as corepressor. May play a role in chromatin remodeling. Transcriptional corepressor that down-regulates the expression of target genes. Binds to target promoters, leading to increased histone H3 acetylation at 'Lys-9' (H3K9ac). Binds to the ESR1 promoter. Recruits BRCA1 and POU2F1 to the ESR1 promoter. Coactivator for TP53-mediated activation of transcription of a set of target genes. Required for TP53-mediated cell-cycle arrest in response to oncogene activation. Promotes acetylation of TP53 at 'Lys-382', and thereby promotes efficient recruitment of TP53 to target promoters. Inhibits cell cycle progression from G1 to S phase. Activator of the Wnt signaling pathway in a DVL1-dependent manner by negatively regulating the GSK3B phosphotransferase activity. Induces dephosphorylation of GSK3B at 'Tyr-216'. Down-regulates TRIM24-mediated activation of transcriptional activation by AR. This is Bromodomain-containing protein 7 (Brd7) from Mus musculus (Mouse).